The chain runs to 169 residues: Probable NADH dehydrogenase [ubiquinone] 1 alpha subcomplex subunit 5, mitochondrial (169 aa).

Residues 1 to 11 (MFLRAIGRPLL) constitute a mitochondrion transit peptide.

This sequence belongs to the complex I NDUFA5 subunit family. In terms of assembly, complex I is composed of at least 49 different subunits.

The protein localises to the mitochondrion inner membrane. Its function is as follows. Accessory subunit of the mitochondrial membrane respiratory chain NADH dehydrogenase (Complex I), that is believed not to be involved in catalysis. Complex I functions in the transfer of electrons from NADH to the respiratory chain. The immediate electron acceptor for the enzyme is believed to be ubiquinone. The protein is Probable NADH dehydrogenase [ubiquinone] 1 alpha subcomplex subunit 5, mitochondrial of Arabidopsis thaliana (Mouse-ear cress).